Here is a 644-residue protein sequence, read N- to C-terminus: Protein lin-9 (644 aa).

Positions 1-77 (MSSAVRSPRK…GRDSPSVNSL (77 aa)) are disordered. A compositionally biased stretch (basic residues) spans 50-62 (SIKRTGSPKKSPA).

This sequence belongs to the lin-9 family. In terms of assembly, component of the DRM complex, at least composed of lin-9, lin-35, lin-37, lin-52, lin-53, lin-54- dpl-1 and efl-1. Interacts with zft-11; the interaction is required to suppress the activation of non-neuronal genes in neurons.

Its subcellular location is the nucleus. Synthetic multivulva class B (synMuvB) protein. SynMuvB proteins are required to repress the induction of vulval development by Ras signaling and probably act by forming the multiprotein DRM complex that represses transcription. Required for the development of sheath cells in the hermaphrodite gonad and for the development of the male spicule, rays and gonad. In association with the zinc finger protein ztf-11, negatively regulates the expression of non-neuronal genes during neurogenesis. This Caenorhabditis elegans protein is Protein lin-9.